Reading from the N-terminus, the 70-residue chain is UPF0150 protein TM_1311 (70 aa).

Belongs to the UPF0150 family.

This Thermotoga maritima (strain ATCC 43589 / DSM 3109 / JCM 10099 / NBRC 100826 / MSB8) protein is UPF0150 protein TM_1311.